Reading from the N-terminus, the 257-residue chain is Hydroxyacylglutathione hydrolase (257 aa).

Zn(2+) is bound by residues H54, H56, D58, H59, H113, D137, and H175.

The protein belongs to the metallo-beta-lactamase superfamily. Glyoxalase II family. Monomer. Zn(2+) serves as cofactor.

The enzyme catalyses an S-(2-hydroxyacyl)glutathione + H2O = a 2-hydroxy carboxylate + glutathione + H(+). Its pathway is secondary metabolite metabolism; methylglyoxal degradation; (R)-lactate from methylglyoxal: step 2/2. Its function is as follows. Thiolesterase that catalyzes the hydrolysis of S-D-lactoyl-glutathione to form glutathione and D-lactic acid. This is Hydroxyacylglutathione hydrolase from Trichormus variabilis (strain ATCC 29413 / PCC 7937) (Anabaena variabilis).